A 349-amino-acid chain; its full sequence is UDP-N-acetylenolpyruvoylglucosamine reductase (349 aa).

An FAD-binding PCMH-type domain is found at 25–197 (GIAARARFAA…VAVTFRLPKQ (173 aa)). Arg173 is an active-site residue. Ser249 serves as the catalytic Proton donor. Glu345 is an active-site residue.

It belongs to the MurB family. The cofactor is FAD.

The protein localises to the cytoplasm. It catalyses the reaction UDP-N-acetyl-alpha-D-muramate + NADP(+) = UDP-N-acetyl-3-O-(1-carboxyvinyl)-alpha-D-glucosamine + NADPH + H(+). The protein operates within cell wall biogenesis; peptidoglycan biosynthesis. In terms of biological role, cell wall formation. This Burkholderia cenocepacia (strain HI2424) protein is UDP-N-acetylenolpyruvoylglucosamine reductase.